We begin with the raw amino-acid sequence, 153 residues long: 6,7-dimethyl-8-ribityllumazine synthase (153 aa).

Residues F22, 56 to 58 (AFE), and 80 to 82 (AVI) each bind 5-amino-6-(D-ribitylamino)uracil. 85–86 (ST) provides a ligand contact to (2S)-2-hydroxy-3-oxobutyl phosphate. H88 (proton donor) is an active-site residue. Residue F113 participates in 5-amino-6-(D-ribitylamino)uracil binding. Residue R127 participates in (2S)-2-hydroxy-3-oxobutyl phosphate binding.

It belongs to the DMRL synthase family.

It catalyses the reaction (2S)-2-hydroxy-3-oxobutyl phosphate + 5-amino-6-(D-ribitylamino)uracil = 6,7-dimethyl-8-(1-D-ribityl)lumazine + phosphate + 2 H2O + H(+). It functions in the pathway cofactor biosynthesis; riboflavin biosynthesis; riboflavin from 2-hydroxy-3-oxobutyl phosphate and 5-amino-6-(D-ribitylamino)uracil: step 1/2. Functionally, catalyzes the formation of 6,7-dimethyl-8-ribityllumazine by condensation of 5-amino-6-(D-ribitylamino)uracil with 3,4-dihydroxy-2-butanone 4-phosphate. This is the penultimate step in the biosynthesis of riboflavin. This Fusobacterium nucleatum subsp. nucleatum (strain ATCC 25586 / DSM 15643 / BCRC 10681 / CIP 101130 / JCM 8532 / KCTC 2640 / LMG 13131 / VPI 4355) protein is 6,7-dimethyl-8-ribityllumazine synthase.